The primary structure comprises 780 residues: Tripartite terminase subunit 1 (780 aa).

Disordered regions lie at residues 41–66 (RGNAPPTEAERASGAGAAASSEAGPG), 428–447 (GAGAGGPKGGAGPDDDGDRV), and 452–483 (GARGLGAPGGGGEDEAPSPRARGTGPETWGDI). The span at 52 to 63 (ASGAGAAASSEA) shows a compositional bias: low complexity. Over residues 429-439 (AGAGGPKGGAG) the composition is skewed to gly residues. 691-698 (FASVYRCG) is a binding site for ATP.

This sequence belongs to the herpesviridae TRM1 protein family. As to quaternary structure, associates with TRM2 and TRM3 to form the tripartite terminase complex. Interacts with portal protein.

It localises to the host nucleus. Component of the molecular motor that translocates viral genomic DNA in empty capsid during DNA packaging. Forms a tripartite terminase complex together with TRM2 and TRM3 in the host cytoplasm. Once the complex reaches the host nucleus, it interacts with the capsid portal vertex. This portal forms a ring in which genomic DNA is translocated into the capsid. TRM1 carries an endonuclease activity that plays an important role for the cleavage of concatemeric viral DNA into unit length genomes. The protein is Tripartite terminase subunit 1 of Homo sapiens (Human).